Here is a 331-residue protein sequence, read N- to C-terminus: 6-phosphogluconolactonase (331 aa).

The protein belongs to the cycloisomerase 2 family.

It carries out the reaction 6-phospho-D-glucono-1,5-lactone + H2O = 6-phospho-D-gluconate + H(+). The protein operates within carbohydrate degradation; pentose phosphate pathway; D-ribulose 5-phosphate from D-glucose 6-phosphate (oxidative stage): step 2/3. Its function is as follows. Catalyzes the hydrolysis of 6-phosphogluconolactone to 6-phosphogluconate. In Serratia proteamaculans (strain 568), this protein is 6-phosphogluconolactonase.